The chain runs to 133 residues: Otoraplin (133 aa).

The first 23 residues, 1 to 23 (MAKTFYVVVIVLCLGFIHQKAYG), serve as a signal peptide directing secretion. Intrachain disulfides connect cysteine 35/cysteine 40 and cysteine 58/cysteine 132. The 74-residue stretch at 42–115 (YAISFGRAED…PSSLVTELTV (74 aa)) folds into the SH3 domain.

Belongs to the MIA/OTOR family.

Its subcellular location is the secreted. In Aquarana catesbeiana (American bullfrog), this protein is Otoraplin (OTOR).